The sequence spans 318 residues: Protein IMPACT-A (318 aa).

Residues 14–116 (DEVEALTSIY…EKIREFLLGK (103 aa)) form the RWD domain. The tract at residues 296–318 (EESSKQTAKSKKVGKECKKKADH) is disordered. A compositionally biased stretch (basic and acidic residues) spans 308 to 318 (VGKECKKKADH).

Belongs to the IMPACT family. Interacts with GCN1; prevents the interaction of GCN1 with EIF2AK4/GCN2 and inhibits EIF2AK4/GCN2 kinase activity. Interaction with RPL39; this interaction occurs in a GCN1-independent manner. Associates with ribosomes; this interaction occurs in a GCN1-independent manner. Associates with actin; this interaction occurs in a GCN1-independent manner.

The protein resides in the cytoplasm. Translational regulator that ensures constant high levels of translation upon a variety of stress conditions, such as amino acid starvation, UV-C irradiation, proteasome inhibitor treatment and glucose deprivation. Plays a role as a negative regulator of the EIF2AK4/GCN2 kinase activity; impairs GCN1-mediated EIF2AK4/GCN2 activation, and hence EIF2AK4/GCN2-mediated eIF-2-alpha phosphorylation and subsequent down-regulation of protein synthesis. Plays a role in differentiation of neuronal cells by stimulating neurite outgrowth. This Xenopus tropicalis (Western clawed frog) protein is Protein IMPACT-A (impact-A).